The primary structure comprises 364 residues: Aminomethyltransferase (364 aa).

It belongs to the GcvT family. As to quaternary structure, the glycine cleavage system is composed of four proteins: P, T, L and H.

The catalysed reaction is N(6)-[(R)-S(8)-aminomethyldihydrolipoyl]-L-lysyl-[protein] + (6S)-5,6,7,8-tetrahydrofolate = N(6)-[(R)-dihydrolipoyl]-L-lysyl-[protein] + (6R)-5,10-methylene-5,6,7,8-tetrahydrofolate + NH4(+). Functionally, the glycine cleavage system catalyzes the degradation of glycine. The polypeptide is Aminomethyltransferase (Photorhabdus laumondii subsp. laumondii (strain DSM 15139 / CIP 105565 / TT01) (Photorhabdus luminescens subsp. laumondii)).